The following is a 289-amino-acid chain: MPVYVDREAPKLWRRIYSEATLEASLLAEKWKLVLAGLVFQYIHGLAAHGVHYLHRPGPTLQDAGFFILPALGQDKAFFSETVFVTIFGSFILWTFHPFVSHSKKICTVLIWCRVFVYLAASQSLRIITFFATQLPGPNYHCREGSKLAKIPPPKNVLEVLLINFPDGVIYGCGDLIFSSHTIFTLVFVRTYQRYGTRRWIKHLAWLMAVIQSILIIASRKHYTVDIVVAWYTVNLVMFYVDSKLPEMAERSSGPSPTPLLPLSTKDSKNKSKEDHQRLLNENNVADDH.

A run of 5 helical transmembrane segments spans residues 33–53 (LVLAGLVFQYIHGLAAHGVHY), 77–97 (AFFSETVFVTIFGSFILWTFH), 115–135 (VFVYLAASQSLRIITFFATQL), 169–189 (VIYGCGDLIFSSHTIFTLVFV), and 199–219 (RWIKHLAWLMAVIQSILIIAS). H181 is a catalytic residue. Catalysis depends on residues H222 and D226. The chain crosses the membrane as a helical span at residues 223 to 243 (YTVDIVVAWYTVNLVMFYVDS). The disordered stretch occupies residues 249-289 (AERSSGPSPTPLLPLSTKDSKNKSKEDHQRLLNENNVADDH). Positions 266–279 (KDSKNKSKEDHQRL) are enriched in basic and acidic residues. The segment covering 280–289 (LNENNVADDH) has biased composition (polar residues).

This sequence belongs to the sphingomyelin synthase family. In terms of tissue distribution, mostly expressed in stems and flowers, and, to a lower extent, in leaves, roots and siliques.

It is found in the membrane. Catalyzes the transfer of the phosphorylinositol group from phosphatidylinositol (PI) to phytoceramide, an essential step in sphingolipid biosynthesis. The polypeptide is Phosphatidylinositol:ceramide inositolphosphotransferase 3 (IPCS3) (Arabidopsis thaliana (Mouse-ear cress)).